The chain runs to 562 residues: Arginine--tRNA ligase (562 aa).

The short motif at 122 to 132 (PNIAKDMHVGH) is the 'HIGH' region element.

The protein belongs to the class-I aminoacyl-tRNA synthetase family. Monomer.

It localises to the cytoplasm. The catalysed reaction is tRNA(Arg) + L-arginine + ATP = L-arginyl-tRNA(Arg) + AMP + diphosphate. The chain is Arginine--tRNA ligase from Chlamydia abortus (strain DSM 27085 / S26/3) (Chlamydophila abortus).